The following is a 330-amino-acid chain: Flotillin-like protein FloA (330 aa).

The next 2 helical transmembrane spans lie at 5–25 and 27–47; these read FLPL…FYYV and FLLW…QLFL.

This sequence belongs to the flotillin-like FloA family. Homooligomerizes.

It localises to the cell membrane. Its subcellular location is the membrane raft. Its function is as follows. Found in functional membrane microdomains (FMM) that may be equivalent to eukaryotic membrane rafts. FMMs are highly dynamic and increase in number as cells age. Flotillins are thought to be important factors in membrane fluidity. This chain is Flotillin-like protein FloA, found in Parabacteroides distasonis (strain ATCC 8503 / DSM 20701 / CIP 104284 / JCM 5825 / NCTC 11152).